The sequence spans 175 residues: uncharacterized protein (175 aa).

A DNL-type zinc finger spans residues 71 to 166; sequence QPKPTYNVSF…KPPQFKIRPA (96 aa). Positions 82, 85, 107, and 110 each coordinate Zn(2+).

This is an uncharacterized protein from Schizosaccharomyces pombe (strain 972 / ATCC 24843) (Fission yeast).